The primary structure comprises 438 residues: Histidinol dehydrogenase (438 aa).

NAD(+)-binding residues include Y129, Q193, and N216. 3 residues coordinate substrate: T239, Q261, and H264. Residues Q261 and H264 each coordinate Zn(2+). Residues E330 and H331 each act as proton acceptor in the active site. Residues H331, D364, E418, and H423 each coordinate substrate. D364 lines the Zn(2+) pocket. Zn(2+) is bound at residue H423.

Belongs to the histidinol dehydrogenase family. Zn(2+) is required as a cofactor.

It carries out the reaction L-histidinol + 2 NAD(+) + H2O = L-histidine + 2 NADH + 3 H(+). It participates in amino-acid biosynthesis; L-histidine biosynthesis; L-histidine from 5-phospho-alpha-D-ribose 1-diphosphate: step 9/9. In terms of biological role, catalyzes the sequential NAD-dependent oxidations of L-histidinol to L-histidinaldehyde and then to L-histidine. This is Histidinol dehydrogenase from Thermobifida fusca (strain YX).